Consider the following 205-residue polypeptide: N-(5'-phosphoribosyl)anthranilate isomerase (205 aa).

This sequence belongs to the TrpF family.

The enzyme catalyses N-(5-phospho-beta-D-ribosyl)anthranilate = 1-(2-carboxyphenylamino)-1-deoxy-D-ribulose 5-phosphate. It participates in amino-acid biosynthesis; L-tryptophan biosynthesis; L-tryptophan from chorismate: step 3/5. The chain is N-(5'-phosphoribosyl)anthranilate isomerase from Thiobacillus denitrificans (strain ATCC 25259 / T1).